The chain runs to 579 residues: MEQQQQQQLPSTTTRPKPKLLNRLNTYVGSSRVGKRFKLAERNSTFTTELRAGTATFLTMAYILAVNASILSDSGGTCSVSDCIPLCSNPAIEPSQCTGPGLRLIQPDVSCKFNPVNPGYAACVEEIRKDLIVATVAASLIGCVIMGLMANLPLALAPGMGTNAYFAYTVVGFHGSGSISYRTALAAVFIEGLIFLFISAIGFRAKLAKLVPKPVRISSSAGIGLFLAFIGLQNNQGIGLVGYSPSTLVTLAACPASSRISLAPVITSANGTVSLLAGGSVSGDIMCIHGRMESPTFWLGIVGFVIIAYCLVKNVKGAMIYGIVFVTAVSWFRNTEVTAFPNTSAGDAAHDYFKKIVDVHVIKHTAGALSFSGINKGHFWEALVTFLYVDILDTTGTLYSMARFAGFVDEKGDFAGQYFAFMSDASAIVIGSLLGTSPVTVFIESSTGIREGGRTGLTAITVAVYFLLAMFFTPLLASIPAWAVGPPLILVGVMMMKSVTEIDWEDMREAIPAFVTMILMPLTYSVAYGLIGGIGSYVVLHLWDWGEEGLVKLGFLKRKVKEEDNNNGVVKASEIDTTV.

The next 12 membrane-spanning stretches (helical) occupy residues 52–72, 131–151, 183–203, 221–241, 260–280, 292–312, 320–340, 379–399, 414–434, 459–479, 480–500, and 514–534; these read AGTA…SILS, LIVA…LMAN, TALA…AIGF, AGIG…IGLV, ISLA…AGGS, MESP…YCLV, IYGI…VTAF, FWEA…GTLY, FAGQ…GSLL, AITV…LASI, PAWA…KSVT, and FVTM…IGGI.

It belongs to the nucleobase:cation symporter-2 (NCS2) (TC 2.A.40) family. Azg-like subfamily.

It localises to the membrane. In terms of biological role, transports natural purines (adenine and guanine) as well as purine analogs. Confers sensitivity to 8-azaadenine and 8-azaguanine (8-azg). This Arabidopsis thaliana (Mouse-ear cress) protein is Adenine/guanine permease AZG1 (AZG1).